Reading from the N-terminus, the 710-residue chain is Aminopeptidase P2 (710 aa).

The N-terminal 79 residues, 1–79 (MIPLTLSSPS…IRKAQTKVVV (79 aa)), are a transit peptide targeting the chloroplast. A peptide-binding residues include arginine 147 and histidine 486. Residues aspartate 506, aspartate 517, and histidine 580 each contribute to the Mn(2+) site. Histidine 580, histidine 589, and glutamate 614 together coordinate a peptide. Residues glutamate 614 and glutamate 628 each contribute to the Mn(2+) site.

Belongs to the peptidase M24B family. In terms of assembly, homodimer. Requires Mn(2+) as cofactor.

It is found in the plastid. The protein resides in the chloroplast. It catalyses the reaction Release of any N-terminal amino acid, including proline, that is linked to proline, even from a dipeptide or tripeptide.. Catalyzes the removal of a penultimate prolyl residue from the N-termini of peptides, such as Arg-Pro-Pro. This Arabidopsis thaliana (Mouse-ear cress) protein is Aminopeptidase P2.